We begin with the raw amino-acid sequence, 337 residues long: Visual pigment-like receptor peropsin (337 aa).

Over Met-1 to Asn-26 the chain is Extracellular. Asn-8 carries an N-linked (GlcNAc...) asparagine glycan. The chain crosses the membrane as a helical span at residues Ile-27–Ile-49. Over Phe-50–Asn-61 the chain is Cytoplasmic. Residues Ala-62–Leu-87 form a helical membrane-spanning segment. Residues Tyr-88–Tyr-101 are Extracellular-facing. A disulfide bond links Cys-98 and Cys-175. A helical membrane pass occupies residues Ala-102 to Val-121. At Asp-122–Thr-140 the chain is on the cytoplasmic side. The chain crosses the membrane as a helical span at residues Tyr-141–Ala-164. Residues Ser-165–Ser-188 are Extracellular-facing. The helical transmembrane segment at Tyr-189 to Val-212 threads the bilayer. The Cytoplasmic segment spans residues Thr-213 to Lys-240. A helical transmembrane segment spans residues Met-241–Ser-264. The Extracellular portion of the chain corresponds to Phe-265–Pro-272. A helical transmembrane segment spans residues Pro-273–Ala-297. The residue at position 284 (Lys-284) is an N6-(retinylidene)lysine. Topologically, residues Asn-298–Ile-337 are cytoplasmic.

The protein belongs to the G-protein coupled receptor 1 family. Opsin subfamily. Found only in the eye, where it is localized to the retinal pigment epithelium (RPE). In the RPE, it is localized to the microvilli that surround the photoreceptor outer segments.

Its subcellular location is the membrane. In terms of biological role, may play a role in rpe physiology either by detecting light directly or by monitoring the concentration of retinoids or other photoreceptor-derived compounds. The sequence is that of Visual pigment-like receptor peropsin (RRH) from Homo sapiens (Human).